Here is a 240-residue protein sequence, read N- to C-terminus: Protein RoBo-1 (240 aa).

The N-terminal stretch at 1-26 (MSWFLVLKCLLTVCIISHLSVSSTES) is a signal peptide. Asn42 carries N-linked (GlcNAc...) asparagine glycosylation. Cystine bridges form between Cys47–Cys76, Cys81–Cys102, Cys103–Cys108, Cys127–Cys151, and Cys144–Cys171. The N-linked (GlcNAc...) asparagine glycan is linked to Asn153.

It belongs to the CNF-like-inhibitor family. N-glycosylated. In terms of tissue distribution, expressed abundantly in bone, including the lengthening growth plate where cartilage is remodeled into bone.

It is found in the secreted. In terms of biological role, may play a novel role in the growth or remodeling of bone. The protein is Protein RoBo-1 of Rattus norvegicus (Rat).